Reading from the N-terminus, the 458-residue chain is Probable beta-eliminating lyase (458 aa).

Lys257 carries the post-translational modification N6-(pyridoxal phosphate)lysine.

Belongs to the beta-eliminating lyase family. Pyridoxal 5'-phosphate is required as a cofactor.

The polypeptide is Probable beta-eliminating lyase (Trichomonas vaginalis (strain ATCC PRA-98 / G3)).